The chain runs to 199 residues: Ion-translocating oxidoreductase complex subunit A (199 aa).

The next 6 membrane-spanning stretches (helical) occupy residues Leu-8–Gly-28, Val-49–Val-69, Phe-75–Ile-95, Ser-106–Leu-126, Val-138–Ile-158, and Ala-178–Leu-198.

This sequence belongs to the NqrDE/RnfAE family. In terms of assembly, the Rnf complex is probably composed of eight subunits, including RnfA, RnfB, RnfC, RnfD, RnfE and RnfG.

The protein localises to the cell membrane. Part of a membrane-bound complex that couples electron transfer with translocation of ions across the membrane. Catalyzes Na(+) transport, most probably coupled to electron transfer from reduced ferredoxin to methanophenazine and heterodisulfide reductase. Involved in heterodisulfide reduction during methanogenesis from acetate. The protein is Ion-translocating oxidoreductase complex subunit A of Methanosarcina acetivorans (strain ATCC 35395 / DSM 2834 / JCM 12185 / C2A).